The sequence spans 56 residues: Small ribosomal subunit protein uS14 (56 aa).

It belongs to the universal ribosomal protein uS14 family. In terms of assembly, component of the small ribosomal subunit (SSU). Mature yeast ribosomes consist of a small (40S) and a large (60S) subunit. The 40S small subunit contains 1 molecule of ribosomal RNA (18S rRNA) and at least 33 different proteins. The large 60S subunit contains 3 rRNA molecules (25S, 5.8S and 5S rRNA) and at least 46 different proteins.

The protein resides in the cytoplasm. The protein localises to the nucleus. In terms of biological role, component of the ribosome, a large ribonucleoprotein complex responsible for the synthesis of proteins in the cell. The small ribosomal subunit (SSU) binds messenger RNAs (mRNAs) and translates the encoded message by selecting cognate aminoacyl-transfer RNA (tRNA) molecules. The large subunit (LSU) contains the ribosomal catalytic site termed the peptidyl transferase center (PTC), which catalyzes the formation of peptide bonds, thereby polymerizing the amino acids delivered by tRNAs into a polypeptide chain. The nascent polypeptides leave the ribosome through a tunnel in the LSU and interact with protein factors that function in enzymatic processing, targeting, and the membrane insertion of nascent chains at the exit of the ribosomal tunnel. This is Small ribosomal subunit protein uS14 (rps29) from Schizosaccharomyces pombe (strain 972 / ATCC 24843) (Fission yeast).